Reading from the N-terminus, the 343-residue chain is Labda-7,13(16),14-triene synthase (343 aa).

Mg(2+)-binding residues include D114 and E119. The DDXXXE motif signature appears at 114–119 (DDVHVE). Residue R206 coordinates substrate. 3 residues coordinate Mg(2+): N252, S256, and E260. An NXXXSXXXE motif motif is present at residues 252–260 (NDLYSFAYE).

Belongs to the terpene synthase family. Mg(2+) serves as cofactor.

It carries out the reaction (13E)-labda-7,13-dien-15-yl diphosphate = labda-7,13(16),14-triene + diphosphate. Functionally, involved in the biosynthesis of the labdane-type bicyclic diterpene labda-7,13(16),14-triene. Catalyzes the conversion of labda-7,13(E)-dienyl diphosphate to yield labda-7,13(16),14-triene. This is Labda-7,13(16),14-triene synthase from Streptomyces clavuligerus.